A 238-amino-acid polypeptide reads, in one-letter code: ATP synthase subunit a (238 aa).

5 consecutive transmembrane segments (helical) span residues 17 to 37, 75 to 95, 112 to 132, 172 to 192, and 194 to 214; these read LSNI…AIIC, FHVL…LGLP, DPIV…YYGI, YGNI…LAHI, and IFVG…SLFI.

Belongs to the ATPase A chain family. In terms of assembly, F-type ATPases have 2 components, CF(1) - the catalytic core - and CF(0) - the membrane proton channel. CF(1) has five subunits: alpha(3), beta(3), gamma(1), delta(1), epsilon(1). CF(0) has three main subunits: a(1), b(2) and c(9-12). The alpha and beta chains form an alternating ring which encloses part of the gamma chain. CF(1) is attached to CF(0) by a central stalk formed by the gamma and epsilon chains, while a peripheral stalk is formed by the delta and b chains.

The protein resides in the cell membrane. Functionally, key component of the proton channel; it plays a direct role in the translocation of protons across the membrane. In Listeria monocytogenes serovar 1/2a (strain ATCC BAA-679 / EGD-e), this protein is ATP synthase subunit a.